Reading from the N-terminus, the 910-residue chain is Protein translocase subunit SecA 1 (910 aa).

ATP-binding positions include Gln-86, 104-108 (GEGKT), and Asp-512. Zn(2+) is bound by residues Cys-894, Cys-896, Cys-905, and His-906.

The protein belongs to the SecA family. As to quaternary structure, monomer and homodimer. Part of the essential Sec protein translocation apparatus which comprises SecA, SecYEG and auxiliary proteins SecDF-YajC and YidC. Zn(2+) serves as cofactor.

It is found in the cell inner membrane. The protein localises to the cytoplasm. It catalyses the reaction ATP + H2O + cellular proteinSide 1 = ADP + phosphate + cellular proteinSide 2.. Part of the Sec protein translocase complex. Interacts with the SecYEG preprotein conducting channel. Has a central role in coupling the hydrolysis of ATP to the transfer of proteins into and across the cell membrane, serving both as a receptor for the preprotein-SecB complex and as an ATP-driven molecular motor driving the stepwise translocation of polypeptide chains across the membrane. The sequence is that of Protein translocase subunit SecA 1 from Bordetella avium (strain 197N).